Reading from the N-terminus, the 252-residue chain is Ribosome assembly factor mrt4 (252 aa).

This sequence belongs to the universal ribosomal protein uL10 family. Associates with the pre-60S ribosomal particle.

The protein resides in the nucleus. Its subcellular location is the nucleolus. It localises to the cytoplasm. Its function is as follows. Component of the ribosome assembly machinery. Nuclear paralog of the ribosomal protein P0, it binds pre-60S subunits at an early stage of assembly in the nucleolus, and is replaced by P0 in cytoplasmic pre-60S subunits and mature 80S ribosomes. The polypeptide is Ribosome assembly factor mrt4 (Neurospora crassa (strain ATCC 24698 / 74-OR23-1A / CBS 708.71 / DSM 1257 / FGSC 987)).